The chain runs to 403 residues: MLKLLQQYEYKIIYKRMLYTCFILFIYILGTNISIVSYNDMQVKHESFFKIAISNMGGDVNTLNIFTLGLVPWLTSMIILMLISYRNMDKYMKQTSLEKHYKERILTLILSVIQSYFVIHEYVSKERVHQDNIYLTILILVTGTMLLVWLADKNSRYGIAGPMPIVMVSIIKSMMHQKMEYIDASHIVIALLIILVIITLFILLFIELVEVRIPYIDLMNVSATNMKSYLSWKVNPAGSITLMMSISAFVFLKSGIHFILSMFNKSISDDMPMLTFDSPVGISVYLVIQMLLGYFLSRFLINTKQKSKDFLKSGNYFSGVKPGKDTERYLNYQARRVCWFGSALVTVIIGIPLYFTLFVPHLSTEIYFSVQLIVLVYISINIAETIRTYLYFDKYKPFLNQYW.

The next 10 membrane-spanning stretches (helical) occupy residues 17–37, 63–83, 105–125, 131–151, 157–177, 186–206, 240–260, 276–296, 339–359, and 366–386; these read MLYTCFILFIYILGTNISIVS, LNIFTLGLVPWLTSMIILMLI, ILTLILSVIQSYFVIHEYVSK, DNIYLTILILVTGTMLLVWLA, YGIAGPMPIVMVSIIKSMMHQ, HIVIALLIILVIITLFILLFI, ITLMMSISAFVFLKSGIHFIL, FDSPVGISVYLVIQMLLGYFL, WFGSALVTVIIGIPLYFTLFV, and IYFSVQLIVLVYISINIAETI.

The protein belongs to the SecY/SEC61-alpha family. SecY2 subfamily. As to quaternary structure, component of the accessory SecA2/SecY2 protein translocase complex required to export cell wall proteins. May form heterotrimers with SecE and SecG subunits.

The protein localises to the cell membrane. In terms of biological role, part of the accessory SecA2/SecY2 system specifically required for export of possible cell wall proteins. The central subunit of a protein translocation channel. The sequence is that of Accessory Sec system protein translocase subunit SecY2 from Staphylococcus aureus (strain N315).